Here is a 314-residue protein sequence, read N- to C-terminus: L-lactate dehydrogenase (314 aa).

NAD(+)-binding positions include valine 17, aspartate 38, lysine 43, tyrosine 69, and 83–84 (GA). Positions 86 and 92 each coordinate substrate. NAD(+) contacts are provided by residues serine 105, 122–124 (ASN), and serine 147. 124–127 (NPVD) provides a ligand contact to substrate. Substrate is bound at residue 152–155 (DSAR). The beta-D-fructose 1,6-bisphosphate site is built by arginine 157 and histidine 172. Histidine 179 functions as the Proton acceptor in the catalytic mechanism. Tyrosine 223 is subject to Phosphotyrosine. Position 232 (threonine 232) interacts with substrate.

This sequence belongs to the LDH/MDH superfamily. LDH family. As to quaternary structure, homotetramer.

The protein resides in the cytoplasm. The catalysed reaction is (S)-lactate + NAD(+) = pyruvate + NADH + H(+). It functions in the pathway fermentation; pyruvate fermentation to lactate; (S)-lactate from pyruvate: step 1/1. Its activity is regulated as follows. Allosterically activated by fructose 1,6-bisphosphate (FBP). In terms of biological role, catalyzes the conversion of lactate to pyruvate. In Corynebacterium glutamicum (strain ATCC 13032 / DSM 20300 / JCM 1318 / BCRC 11384 / CCUG 27702 / LMG 3730 / NBRC 12168 / NCIMB 10025 / NRRL B-2784 / 534), this protein is L-lactate dehydrogenase.